The sequence spans 324 residues: UDP-N-acetylenolpyruvoylglucosamine reductase (324 aa).

Positions 36-211 constitute an FAD-binding PCMH-type domain; the sequence is FRAGGLAELM…AEDKAKIRND (176 aa). The active site involves R183. Catalysis depends on S232, which acts as the Proton donor. E302 is a catalytic residue.

It belongs to the MurB family. FAD is required as a cofactor.

It localises to the cytoplasm. The catalysed reaction is UDP-N-acetyl-alpha-D-muramate + NADP(+) = UDP-N-acetyl-3-O-(1-carboxyvinyl)-alpha-D-glucosamine + NADPH + H(+). It participates in cell wall biogenesis; peptidoglycan biosynthesis. Its function is as follows. Cell wall formation. The polypeptide is UDP-N-acetylenolpyruvoylglucosamine reductase (Sinorhizobium medicae (strain WSM419) (Ensifer medicae)).